The primary structure comprises 1408 residues: DNA-directed RNA polymerase subunit beta' (1408 aa).

Residues Cys70, Cys72, Cys85, and Cys88 each contribute to the Zn(2+) site. Mg(2+) is bound by residues Asp458, Asp460, and Asp462. 4 residues coordinate Zn(2+): Cys813, Cys887, Cys894, and Cys897. The interval 1387 to 1408 is disordered; that stretch reads AELEAATATAPADAGGDSPATE. Over residues 1389-1408 the composition is skewed to low complexity; that stretch reads LEAATATAPADAGGDSPATE.

The protein belongs to the RNA polymerase beta' chain family. In terms of assembly, the RNAP catalytic core consists of 2 alpha, 1 beta, 1 beta' and 1 omega subunit. When a sigma factor is associated with the core the holoenzyme is formed, which can initiate transcription. Mg(2+) serves as cofactor. Zn(2+) is required as a cofactor.

The catalysed reaction is RNA(n) + a ribonucleoside 5'-triphosphate = RNA(n+1) + diphosphate. Its function is as follows. DNA-dependent RNA polymerase catalyzes the transcription of DNA into RNA using the four ribonucleoside triphosphates as substrates. The polypeptide is DNA-directed RNA polymerase subunit beta' (Polaromonas sp. (strain JS666 / ATCC BAA-500)).